Here is a 207-residue protein sequence, read N- to C-terminus: Ras-related protein Rab-2A (207 aa).

12-20 (GDTGVGKSC) serves as a coordination point for GTP. Residues 34–42 (HDLTIGVEF) carry the Effector region motif. GTP is bound by residues 60–64 (DTAGQ), 118–121 (NKSD), and 148–150 (SAK). Residues 187-207 (GAPTSKQDGTDQKPAGGGCCK) are disordered. 2 S-geranylgeranyl cysteine lipidation sites follow: Cys-205 and Cys-206.

This sequence belongs to the small GTPase superfamily. Rab family.

It is found in the cell membrane. It catalyses the reaction GTP + H2O = GDP + phosphate + H(+). Regulated by guanine nucleotide exchange factors (GEFs) which promote the exchange of bound GDP for free GTP, GTPase activating proteins (GAPs) which increase the GTP hydrolysis activity, and GDP dissociation inhibitors which inhibit the dissociation of the nucleotide from the GTPase. The small GTPases Rab are key regulators of intracellular membrane trafficking, from the formation of transport vesicles to their fusion with membranes. Rabs cycle between active GTP-bound and inactive GDP-bound states. In their active state, drive transport of vesicular carriers from donor organelles to acceptor organelles to regulate the membrane traffic that maintains organelle identity and morphology. This is Ras-related protein Rab-2A (rab2A) from Dictyostelium discoideum (Social amoeba).